The primary structure comprises 419 residues: MQRLKQQQQQQQVMMQQALMQQQSLYHPGLLAPPQIEPIPSGNLPPGFDPSTCRSVYVGNIHIQVTEPLLQEVFAGTGPVESCKLIRKEKSSYGFVHYFDRRSAGLAILSLNGRHLFGQPIKVNWAYASGQREDTSSHFNIFVGDLSPEVTDAMLFTCFSVYPTCSDARVMWDQKTGRSRGFGFVSFRNQQDAQTAIDEITGKWLGSRQIRCNWATKGATSGEDKQSSDSKSVVELTSGVSEDGKDTTNGEAPENNAQYTTVYVGNLAPEVSQVDLHRHFHSLGAGVIEEVRVQRDKGFGFVRYSTHVEAALAIQMGNTHSYLSGRQMKCSWGSKPTPAGTASNPLPPPAPAPIPGFSASDLLAYERQLAMSKMAGMNPMMHHPQGQHAFKQAAMGATGSNQAIYDGGYQNAQQLMYYQ.

RRM domains follow at residues 54–128 (RSVY…WAYA) and 139–217 (FNIF…WATK). The interval 217-257 (KGATSGEDKQSSDSKSVVELTSGVSEDGKDTTNGEAPENNA) is disordered. Ser241 is subject to Phosphoserine. The 76-residue stretch at 260–335 (TTVYVGNLAP…RQMKCSWGSK (76 aa)) folds into the RRM 3 domain.

In terms of assembly, interacts with UBA1A and UBA2A.

Its subcellular location is the nucleus. In terms of biological role, heterogeneous nuclear ribonucleoprotein (hnRNP)-like protein that acts as a component of the pre-mRNA processing machinery. Functions to facilitate the nuclear maturation of plant pre-mRNAs. The protein is Oligouridylate-binding protein 1B (UBP1B) of Arabidopsis thaliana (Mouse-ear cress).